The following is a 363-amino-acid chain: 3-isopropylmalate dehydrogenase A (363 aa).

Position 78 to 89 (78 to 89) interacts with NAD(+); it reads GPKWGTGAVRPE. Positions 96, 106, 135, and 222 each coordinate substrate. Asp-222, Asp-247, and Asp-251 together coordinate Mg(2+). NAD(+) is bound at residue 287 to 299; that stretch reads GSAPDIAGKGIVN.

This sequence belongs to the isocitrate and isopropylmalate dehydrogenases family. In terms of assembly, homodimer. The cofactor is Mg(2+). It depends on Mn(2+) as a cofactor.

The protein localises to the cytoplasm. It carries out the reaction (2R,3S)-3-isopropylmalate + NAD(+) = 4-methyl-2-oxopentanoate + CO2 + NADH. The protein operates within amino-acid biosynthesis; L-leucine biosynthesis; L-leucine from 3-methyl-2-oxobutanoate: step 3/4. Catalyzes the oxidation of 3-carboxy-2-hydroxy-4-methylpentanoate (3-isopropylmalate) to 3-carboxy-4-methyl-2-oxopentanoate. The product decarboxylates to 4-methyl-2 oxopentanoate. This Aspergillus niger protein is 3-isopropylmalate dehydrogenase A (leu2A).